The sequence spans 861 residues: Probable beta-glucosidase A (861 aa).

The first 19 residues, 1–19 (MKLSILEAAALTAASVVSA), serve as a signal peptide directing secretion. N-linked (GlcNAc...) asparagine glycosylation is found at Asn62, Asn212, and Asn253. The active site involves Asp281. Asn316, Asn323, Asn355, Asn524, Asn543, Asn565, Asn669, and Asn713 each carry an N-linked (GlcNAc...) asparagine glycan. Residues 735 to 754 (PEGATDGSPQPRLPASGGPG) are disordered.

The protein belongs to the glycosyl hydrolase 3 family.

The protein localises to the secreted. The catalysed reaction is Hydrolysis of terminal, non-reducing beta-D-glucosyl residues with release of beta-D-glucose.. Its pathway is glycan metabolism; cellulose degradation. In terms of biological role, beta-glucosidases are one of a number of cellulolytic enzymes involved in the degradation of cellulosic biomass. Catalyzes the last step releasing glucose from the inhibitory cellobiose. The chain is Probable beta-glucosidase A (bglA) from Aspergillus terreus (strain NIH 2624 / FGSC A1156).